The chain runs to 65 residues: MGNTSITIEFTSKFWPYFTLIHMILTPISLLIIITIMIAILNKLSEHKTFCNKTLELGQMYQINT.

Residues 1-20 (MGNTSITIEFTSKFWPYFTL) are Intravirion-facing. The segment at 6-15 (ITIEFTSKFW) is interaction with host BCAP31. The helical; Signal-anchor for type II membrane protein transmembrane segment at 21–44 (IHMILTPISLLIIITIMIAILNKL) threads the bilayer. Residues 38 to 43 (IAILNK) form an interaction with small-molecule inhibitor region. The Virion surface portion of the chain corresponds to 45-65 (SEHKTFCNKTLELGQMYQINT). Asparagine 52 carries an N-linked (GlcNAc...) asparagine; by host glycan.

Belongs to the orthopneumovirus small hydrophobic protein family. As to quaternary structure, homopentamer forming a funnel-like pore. Interacts with glycoprotein G; this interaction occurs on the surface of virion particles and infected cells. Interacts with host BCAP31 (via C-terminus); this interaction is direct. Four species of SH have been detected in infected cell cytoplasm: a 7.5 kDa non-glycosylated form (SH0), a 13-15 kDa form that contains one or two N-linked carbohydrate side chains of the high-mannose type (SHg), a 21-30 kDa polylactosaminoglycan-modified form of the protein (SHp), and the isoform generated by alternative translational initiation. Of these different forms, SH0 is by far the most abundant protein detected during virus infection. Post-translationally, tyrosine phosphorylated.

The protein localises to the virion membrane. It localises to the host cell membrane. It is found in the host Golgi apparatus membrane. Its subcellular location is the host endoplasmic reticulum membrane. Its activity is regulated as follows. Channel activity is inhibited by copper. Also inhibited by small-molecule pyronin B. Viroporin that forms a homopentameric ion channel displaying low ion selectivity. May play a role in virus morphogenesis and pathogenicity at various stages of the viral life cycle. Accumulates at the membrane of the Golgi apparatus in infected cells and may facilitate virus release by modifying the secretory pathway. May enhance host membrane permeability and disrupt cellular ion homeostasis, which can be sensed as damage-associated molecular patterns/danger signals, triggering NLRP3 inflammasome activation and inflammatory immune response. Also inhibits host TNFA-mediated signaling pathway and may delay apoptosis, allowing time for the virus to replicate. In Human respiratory syncytial virus B (strain 18537), this protein is Small hydrophobic protein.